The following is a 277-amino-acid chain: 3-methyl-2-oxobutanoate hydroxymethyltransferase (277 aa).

Residues aspartate 58 and aspartate 97 each coordinate Mg(2+). 3-methyl-2-oxobutanoate-binding positions include 58 to 59 (DS), aspartate 97, and lysine 127. Glutamate 129 is a binding site for Mg(2+). The active-site Proton acceptor is the glutamate 195.

This sequence belongs to the PanB family. In terms of assembly, homodecamer; pentamer of dimers. Requires Mg(2+) as cofactor.

The protein localises to the cytoplasm. The enzyme catalyses 3-methyl-2-oxobutanoate + (6R)-5,10-methylene-5,6,7,8-tetrahydrofolate + H2O = 2-dehydropantoate + (6S)-5,6,7,8-tetrahydrofolate. Its pathway is cofactor biosynthesis; (R)-pantothenate biosynthesis; (R)-pantoate from 3-methyl-2-oxobutanoate: step 1/2. In terms of biological role, catalyzes the reversible reaction in which hydroxymethyl group from 5,10-methylenetetrahydrofolate is transferred onto alpha-ketoisovalerate to form ketopantoate. The sequence is that of 3-methyl-2-oxobutanoate hydroxymethyltransferase from Leifsonia xyli subsp. xyli (strain CTCB07).